A 398-amino-acid chain; its full sequence is Probable purine permease 17 (398 aa).

A disordered region spans residues 1-26; the sequence is MEMSKASKQTTRHEESEHVQNPEPDQ. Positions 11–20 are enriched in basic and acidic residues; sequence TRHEESEHVQ. Position 29 is a phosphoserine (S29). The next 10 helical transmembrane spans lie at 43-63, 88-108, 127-147, 155-175, 183-203, 219-239, 258-278, 301-321, 332-352, and 355-375; these read ISVS…MLLL, WTQA…FFIF, LFFL…LFAL, GIFS…TAII, WIII…PDFG, WLAF…QLGF, VLEM…VGLF, VLSL…MIGL, VVHM…FDFM, and VFSW…GSYF.

It belongs to the purine permeases (TC 2.A.7.14) family.

The protein localises to the membrane. In Arabidopsis thaliana (Mouse-ear cress), this protein is Probable purine permease 17 (PUP17).